The sequence spans 688 residues: Glycine--tRNA ligase beta subunit (688 aa).

It belongs to the class-II aminoacyl-tRNA synthetase family. As to quaternary structure, tetramer of two alpha and two beta subunits.

Its subcellular location is the cytoplasm. It catalyses the reaction tRNA(Gly) + glycine + ATP = glycyl-tRNA(Gly) + AMP + diphosphate. In Aliivibrio fischeri (strain MJ11) (Vibrio fischeri), this protein is Glycine--tRNA ligase beta subunit.